The sequence spans 539 residues: Prolyl 4-hydroxylase subunit alpha-2 (539 aa).

An N-terminal signal peptide occupies residues 1 to 16; that stretch reads MRAVLLVCLLAGLAHA. Asparagine 110 carries an N-linked (GlcNAc...) asparagine glycan. Residues 401 to 509 form the Fe2OG dioxygenase domain; that stretch reads TSEELQVANY…KWVSNKWIHE (109 aa). Histidine 419, aspartate 421, and histidine 490 together coordinate Fe cation. Position 500 (lysine 500) interacts with 2-oxoglutarate.

Belongs to the P4HA family. Heterotetramer of two alpha chains and two beta chains. Exist either as a phy-2(2)/pdi-2(2) tetramer or as a phy-1/phy-2/pdi-2(2) tetramer. The cofactor is Fe(2+). L-ascorbate serves as cofactor.

It localises to the endoplasmic reticulum lumen. It carries out the reaction L-prolyl-[collagen] + 2-oxoglutarate + O2 = trans-4-hydroxy-L-prolyl-[collagen] + succinate + CO2. Catalyzes the post-translational formation of 4-hydroxyproline in -Xaa-Pro-Gly- sequences in collagens and other proteins. This chain is Prolyl 4-hydroxylase subunit alpha-2 (phy-2), found in Caenorhabditis elegans.